A 381-amino-acid polypeptide reads, in one-letter code: N-acetyl-alpha-D-glucosaminyl L-malate synthase (381 aa).

Residues S16, Y94, and T122 each coordinate (S)-malate. The UDP site is built by N206, Q262, and E290.

Belongs to the glycosyltransferase group 1 family. Glycosyltransferase 4 subfamily. In terms of assembly, dimer of tetramers.

It catalyses the reaction (S)-malate + UDP-N-acetyl-alpha-D-glucosamine = (S)-malyl N-acetyl-alpha-D-glucosaminide + UDP + H(+). Its function is as follows. Involved in bacillithiol (BSH) biosynthesis. Catalyzes the first step of the pathway, the formation of N-acetylglucosaminylmalate (GlcNAc-Mal) from UDP-N-acetylglucosamine (UDP-GlcNAc) and L-malate. The chain is N-acetyl-alpha-D-glucosaminyl L-malate synthase from Bacillus anthracis.